Consider the following 501-residue polypeptide: Lysine--tRNA ligase (501 aa).

Glutamate 411 and glutamate 418 together coordinate Mg(2+).

The protein belongs to the class-II aminoacyl-tRNA synthetase family. As to quaternary structure, homodimer. The cofactor is Mg(2+).

It localises to the cytoplasm. The catalysed reaction is tRNA(Lys) + L-lysine + ATP = L-lysyl-tRNA(Lys) + AMP + diphosphate. This chain is Lysine--tRNA ligase, found in Clostridium perfringens (strain ATCC 13124 / DSM 756 / JCM 1290 / NCIMB 6125 / NCTC 8237 / Type A).